The chain runs to 182 residues: uncharacterized protein (182 aa).

This is an uncharacterized protein from Mycobacterium tuberculosis (strain CDC 1551 / Oshkosh).